The chain runs to 430 residues: MLSFLGKSVALLAALQATLSSASPLATEERSIEKRANGYANSVYFTNWGIYDRNFQPADLVASDVTHVIYSFMNLQADGTVVSGDTYADFEKHYADDSWNDVGTNAYGCAKQLFKVKKANRGLKVLLSIGGWTWSTNFPSAASTDANRKNFAKTAITFMKDWGFDGIDVDWEYPADATQASNMVLLLKEVRSQLDAYAAQYAPGYHFLLTIAAPAGKDNYSKLRLADLGQVLDYINLMAYDYAGSFSPLTGHDANLFANPSNPNATPFNTDSAVKDYIKGGVPANKIVLGMPIYGRSFQNTAGIGQTYNGVGGGGGGSTGSWEAGIWDYKALPKAGATIQYDSVAKGYYSYNAGTKELISFDTPDMINTKVAYLKSLGLGGSMFWEASADKKGADSLIGTSHRALGGLDTTQNLLSYPNSKYDNIRNGLN.

The N-terminal stretch at 1–22 (MLSFLGKSVALLAALQATLSSA) is a signal peptide. Positions 23–35 (SPLATEERSIEKR) are excised as a propeptide. The GH18 domain occupies 39–408 (YANSVYFTNW…GTSHRALGGL (370 aa)). Residues 103–104 (GT) and 130–133 (GGWT) contribute to the chitin site. Glu-172 (proton donor) is an active-site residue. A chitin-binding site is contributed by Tyr-173. The N-linked (GlcNAc...) asparagine glycan is linked to Asn-219. Residues 238–241 (MAYD) and Trp-385 each bind chitin.

It belongs to the glycosyl hydrolase 18 family. Chitinase class V subfamily.

The protein localises to the secreted. The enzyme catalyses Random endo-hydrolysis of N-acetyl-beta-D-glucosaminide (1-&gt;4)-beta-linkages in chitin and chitodextrins.. Functionally, secreted chitinase involved in the degradation of chitin, a component of the cell walls of fungi and exoskeletal elements of some animals (including worms and arthropods). Plays a morphogenetic role during apical growth, cell division and differentiation (cell wall morphogenesis). Also acts as an antifungal agent. Involved in the degradation and further assimilation of phytopathogenic fungi, namely mycoparasitism, the major mechanism accounting for the antagonistic activity against phytopathogenic fungi displayed by Trichoderma. This Trichoderma harzianum (Hypocrea lixii) protein is Endochitinase 46 (chit46).